The sequence spans 154 residues: Putative pre-16S rRNA nuclease (154 aa).

This sequence belongs to the YqgF nuclease family.

It localises to the cytoplasm. In terms of biological role, could be a nuclease involved in processing of the 5'-end of pre-16S rRNA. In Rickettsia africae (strain ESF-5), this protein is Putative pre-16S rRNA nuclease.